A 432-amino-acid chain; its full sequence is Phosphomethylpyrimidine synthase (432 aa).

Residues asparagine 66, methionine 95, tyrosine 124, histidine 163, 185–187 (SRG), 226–229 (DGMR), and glutamate 265 contribute to the substrate site. Histidine 269 provides a ligand contact to Zn(2+). Tyrosine 292 contributes to the substrate binding site. Position 333 (histidine 333) interacts with Zn(2+). 3 residues coordinate [4Fe-4S] cluster: cysteine 409, cysteine 412, and cysteine 416.

It belongs to the ThiC family. [4Fe-4S] cluster serves as cofactor.

The catalysed reaction is 5-amino-1-(5-phospho-beta-D-ribosyl)imidazole + S-adenosyl-L-methionine = 4-amino-2-methyl-5-(phosphooxymethyl)pyrimidine + CO + 5'-deoxyadenosine + formate + L-methionine + 3 H(+). Its pathway is cofactor biosynthesis; thiamine diphosphate biosynthesis. Its function is as follows. Catalyzes the synthesis of the hydroxymethylpyrimidine phosphate (HMP-P) moiety of thiamine from aminoimidazole ribotide (AIR) in a radical S-adenosyl-L-methionine (SAM)-dependent reaction. The protein is Phosphomethylpyrimidine synthase of Desulforudis audaxviator (strain MP104C).